We begin with the raw amino-acid sequence, 184 residues long: uncharacterized protein (184 aa).

This is an uncharacterized protein from Chlamydia pneumoniae (Chlamydophila pneumoniae).